Reading from the N-terminus, the 327-residue chain is Delta(3,5)-Delta(2,4)-dienoyl-CoA isomerase, mitochondrial (327 aa).

The N-terminal 33 residues, 1–33, are a transit peptide targeting the mitochondrion; it reads MATAMTVSSKLLGLLMQQLRGTRQLYFNVSLRS. Substrate-binding positions include 115–119 and glycine 173; that span reads SGIDL. N6-succinyllysine is present on lysine 230. Position 267 is a phosphoserine (serine 267). At lysine 316 the chain carries N6-succinyllysine. Positions 325–327 match the Microbody targeting signal motif; the sequence is SKL. Lysine 326 carries the post-translational modification N6-acetyllysine.

It belongs to the enoyl-CoA hydratase/isomerase family. In terms of assembly, homohexamer. Expressed in heart and liver (at protein level).

It is found in the mitochondrion. It localises to the peroxisome. The enzyme catalyses (3E,5Z)-octadienoyl-CoA = (2E,4E)-octadienoyl-CoA. It carries out the reaction (3E,5Z,8Z,11Z,14Z)-eicosapentaenoyl-CoA = (2E,4E,8Z,11Z,14Z)-eicosapentaenoyl-CoA. The protein operates within lipid metabolism; fatty acid beta-oxidation. Functionally, isomerization of 3-trans,5-cis-dienoyl-CoA to 2-trans,4-trans-dienoyl-CoA. In Rattus norvegicus (Rat), this protein is Delta(3,5)-Delta(2,4)-dienoyl-CoA isomerase, mitochondrial.